We begin with the raw amino-acid sequence, 889 residues long: MSISETPHNKSQGLQKAAGRPKIVVPEGSPSRNSDSGSFTIEGDTSLNDDLLSISGSVTPRARRSSRLSLDSITPRRSFDSRTLSVANSRSFGFENETHSGSMDFSPLGNNSIYEIVMNTRRKNWLNYPTVADIPQVSLSKNDLDDHWKTHVIEYVKNIKSDYQIFQSTNNIRNMNQMEQLKELREGENMHEESFEANLRQGDAELINSIPDFYFSDKFQLDNPRTFHKVLDAIDLFLTKLDMKRQAERDEAFSELRDRLNDFLDIVETLLVTEISKSSHKFFHALSEVDNIQKRALDTMSELKELAQNIKTIDAENIRKKISHLEMIFKRKNVEKLEQGLLQAKLVLNKTDECKSMYEENKLDNCLELIKSIDYLIKGDDSINEDVQSWTRCWPYKLSNLRTIPALSATREFLTNMKIEIGGKFSLQLSILLIDDLRSFCKSIKPKETLHRIQTGSNDKKQTIFTDNFSSKITELIVRLNRCEELTSAFDLYREKSITELKSIIKIYLPTENAHADNNHDEKHLNNGSTSGSKLSRLIKEQTPAEFQSMLVNIFTHALEALRRLYGHQKLLLDISLNELASVKSPNENQHNMITQLDIRTGINEIIRIIQLRTGKIIAVRRELNLSLRYDYFLKFYAICVIFIQECEVLSGEFLTKYLSNVLASQIKHYANAQSSKNYRNIKKKIDAEEWIPYIVDSSIQSDVNDIVSSIDIDPLSWTTILDMVGGSHDCENGRSEDKEKDEGNETYQGHRKSVVVGDKTFVASSSLLATIEVIKELMVLSINLPSIYLSNFEKLCYDALQYYNSSAMASVTQPGNSLLKTGRNLSIMGESLDCLAEFVIIVQRFYQRLSNSNRDFEPFDASHYTTLLGQFQASSNKIYMANAPPPPV.

2 stretches are compositionally biased toward polar residues: residues 1-14 and 30-44; these read MSISETPHNKSQGL and PSRNSDSGSFTIEGD. Residues 1 to 44 form a disordered region; the sequence is MSISETPHNKSQGLQKAAGRPKIVVPEGSPSRNSDSGSFTIEGD. Phosphoserine is present on residues Ser-69 and Ser-72. Thr-74 is modified (phosphothreonine). Positions 286–321 form a coiled coil; the sequence is LSEVDNIQKRALDTMSELKELAQNIKTIDAENIRKK. Basic and acidic residues predominate over residues 729 to 744; that stretch reads HDCENGRSEDKEKDEG. The interval 729-748 is disordered; the sequence is HDCENGRSEDKEKDEGNETY.

It belongs to the VPS54 family. Component of the Golgi-associated retrograde protein (GARP) complex, also called VFT (VPS fifty-three) complex, composed of VPS51, VPS52, VPS53 and VPS54. Also interacts with YPT6, TLG1, RBL2, SEC10, SEC15, EXO84 and ARL1.

The protein resides in the golgi apparatus. It localises to the trans-Golgi network membrane. The protein localises to the endosome membrane. It is found in the mitochondrion membrane. Its function is as follows. Involved in retrograde transport from early and late endosomes to late Golgi by linking the vesicle through the t-SNARE TGL1 to the Golgi, leading to the membrane fusion between late Golgi and endosomal vesicles. Also seems to be involved in protein transport from Golgi to the plasma membrane and is required for the integrity of the actin cytoskeleton. The protein is Vacuolar protein sorting-associated protein 54 (VPS54) of Saccharomyces cerevisiae (strain ATCC 204508 / S288c) (Baker's yeast).